The primary structure comprises 211 residues: uncharacterized protein (211 aa).

It belongs to the A.longa ORF167/ORF288 family.

The protein localises to the plastid. This is an uncharacterized protein from Euglena longa (Euglenophycean alga).